The primary structure comprises 149 residues: MGNLKEILEGGWSLVEGMRVTFRRLLRPVVTVQYPREVVTLSPAFRGHIELKSFADTGTHKCIACGTCERMCPSNVIKVQGTKAQPKGAKVATHYVIDFTRCSLCGICVESCPTGTLQYSTEYELAGESRWDGVIDLMQRFEARRPQSL.

4Fe-4S ferredoxin-type domains follow at residues 51–82 (LKSFADTGTHKCIACGTCERMCPSNVIKVQGT) and 93–122 (THYVIDFTRCSLCGICVESCPTGTLQYSTE). 8 residues coordinate [4Fe-4S] cluster: Cys-62, Cys-65, Cys-68, Cys-72, Cys-102, Cys-105, Cys-108, and Cys-112.

This sequence belongs to the complex I 23 kDa subunit family. In terms of assembly, NDH-1 is composed of 14 different subunits. Subunits NuoA, H, J, K, L, M, N constitute the membrane sector of the complex. It depends on [4Fe-4S] cluster as a cofactor.

It is found in the cell inner membrane. It carries out the reaction a quinone + NADH + 5 H(+)(in) = a quinol + NAD(+) + 4 H(+)(out). Functionally, NDH-1 shuttles electrons from NADH, via FMN and iron-sulfur (Fe-S) centers, to quinones in the respiratory chain. The immediate electron acceptor for the enzyme in this species is believed to be ubiquinone. Couples the redox reaction to proton translocation (for every two electrons transferred, four hydrogen ions are translocated across the cytoplasmic membrane), and thus conserves the redox energy in a proton gradient. The protein is NADH-quinone oxidoreductase subunit I 1 of Syntrophobacter fumaroxidans (strain DSM 10017 / MPOB).